A 296-amino-acid polypeptide reads, in one-letter code: Ribosomal protein L11 methyltransferase (296 aa).

Positions 146, 167, 189, and 231 each coordinate S-adenosyl-L-methionine.

This sequence belongs to the methyltransferase superfamily. PrmA family.

It is found in the cytoplasm. It catalyses the reaction L-lysyl-[protein] + 3 S-adenosyl-L-methionine = N(6),N(6),N(6)-trimethyl-L-lysyl-[protein] + 3 S-adenosyl-L-homocysteine + 3 H(+). Its function is as follows. Methylates ribosomal protein L11. The protein is Ribosomal protein L11 methyltransferase of Haemophilus influenzae (strain ATCC 51907 / DSM 11121 / KW20 / Rd).